The following is a 2554-amino-acid chain: Protein sevenless (2554 aa).

Over residues 1 to 10 (MTMFWQQNVD) the composition is skewed to polar residues. Residues 1–25 (MTMFWQQNVDHQSDEQDKQAKGAAP) form a disordered region. Residues 1–2123 (MTMFWQQNVD…AEPFVSPEKR (2123 aa)) are Extracellular-facing. A compositionally biased stretch (basic and acidic residues) spans 11–20 (HQSDEQDKQA). An N-linked (GlcNAc...) asparagine glycan is attached at asparagine 30. Residues 51 to 70 (NQQAPGTSSSSSNSQNASPS) are compositionally biased toward low complexity. The disordered stretch occupies residues 51–75 (NQQAPGTSSSSSNSQNASPSKIVVR). Asparagine 129 carries an N-linked (GlcNAc...) asparagine glycan. The segment at 181 to 208 (SRPQSTMAHHPDDRDRDRDPSEEQHGVD) is disordered. Positions 189–208 (HHPDDRDRDRDPSEEQHGVD) are enriched in basic and acidic residues. The region spanning 440-533 (APVIEHLMGL…GFVQTHSARN (94 aa)) is the Fibronectin type-III 1 domain. N-linked (GlcNAc...) asparagine glycosylation is found at asparagine 481, asparagine 505, asparagine 617, and asparagine 647. The region spanning 824–924 (AGGKPHSLKA…EPLAARTWPL (101 aa)) is the Fibronectin type-III 2 domain. Asparagine 966 carries N-linked (GlcNAc...) asparagine glycosylation. Residues 1010–1053 (GRVYWTDLARNCVVRMDPWSGSRELLPVFEANFLALDPRQGHLY) form an LDL-receptor class B repeat. Fibronectin type-III domains follow at residues 1202 to 1290 (LPDS…TPPV) and 1294 to 1397 (QPRR…VAPE). Residues asparagine 1228, asparagine 1313, asparagine 1353, asparagine 1550, asparagine 1557, asparagine 1639, asparagine 1725, asparagine 1756, asparagine 1804, asparagine 1889, asparagine 1947, and asparagine 2073 are each glycosylated (N-linked (GlcNAc...) asparagine). 3 consecutive Fibronectin type-III domains span residues 1801–1901 (PPRN…SFAE), 1902–1988 (LPEL…VYET), and 1995–2117 (QPGK…AEPF). Residues 2124 to 2147 (GSLVLAIIAPAAIVSSCVLALVLV) form a helical membrane-spanning segment. Residues 2148 to 2554 (RKVQKRRLRA…LYANEGVSRL (407 aa)) lie on the Cytoplasmic side of the membrane. A Protein kinase domain is found at 2209-2485 (LKLLRFLGSG…RCYNTLHAIS (277 aa)). ATP-binding positions include 2215-2223 (LGSGAFGEV) and lysine 2242. The active-site Proton acceptor is aspartate 2343. Phosphotyrosine; by autocatalysis is present on tyrosine 2380. Positions 2515 to 2527 (GQPLEEHREHNER) are enriched in basic and acidic residues. Residues 2515–2534 (GQPLEEHREHNERPEDENLT) form a disordered region.

This sequence belongs to the protein kinase superfamily. Tyr protein kinase family. Insulin receptor subfamily. May form a complex with drk and Sos. Binds the phosphotyrosine interaction domain (PID) of Dab.

It localises to the cell membrane. The enzyme catalyses L-tyrosyl-[protein] + ATP = O-phospho-L-tyrosyl-[protein] + ADP + H(+). Functionally, receptor for an extracellular signal required to instruct a cell to differentiate into an R7 photoreceptor. The ligand for sev is the boss (bride of sevenless) protein on the surface of the neighboring R8 cell. This chain is Protein sevenless (sev), found in Drosophila melanogaster (Fruit fly).